The chain runs to 708 residues: Prolyl 3-hydroxylase 2 (708 aa).

The signal sequence occupies residues 1 to 24; it reads MRERIWAPPLLLLLPLLLPPPLWG. TPR repeat units lie at residues 44-77, 148-181, 210-243, and 306-339; these read FDLL…HRRL, RVPY…NPEH, HMES…YFVE, and PLHY…HPDD. 2 N-linked (GlcNAc...) asparagine glycosylation sites follow: Asn449 and Asn549. Residues 557–671 form the Fe2OG dioxygenase domain; the sequence is THMVCRTALS…RCAVALWFTL (115 aa). 3 residues coordinate Fe cation: His580, Asp582, and His652. Residue Arg662 is part of the active site. The short motif at 705-708 is the Prevents secretion from ER element; it reads KDEL.

It belongs to the leprecan family. The cofactor is Fe cation. L-ascorbate serves as cofactor. In terms of tissue distribution, expression localized to the epithelia of bile ducts and to the sacroplasm of heart muscle and skeletal muscle. In the pancreas, localized to a subpopulation of Langerhans islet cells and in the salivary gland, expressed in acinar cells (at protein level). Expressed in adult heart, placenta, lung, liver, skeletal muscle and kidney. Detected in fetal heart, spleen, lung, liver skeletal muscle and kidney.

The protein resides in the endoplasmic reticulum. It is found in the sarcoplasmic reticulum. Its subcellular location is the golgi apparatus. The enzyme catalyses L-prolyl-[collagen] + 2-oxoglutarate + O2 = trans-3-hydroxy-L-prolyl-[collagen] + succinate + CO2. With respect to regulation, inhibited by pyridine 2,4-dicarboxylate, an analog of 2-oxoglutarate. Prolyl 3-hydroxylase that catalyzes the post-translational formation of 3-hydroxyproline on collagens. Contributes to proline 3-hydroxylation of collagen COL4A1 and COL1A1 in tendons, the eye sclera and in the eye lens capsule. Has high activity with the type IV collagen COL4A1, and lower activity with COL1A1. Catalyzes hydroxylation of the first Pro in Gly-Pro-Hyp sequences where Hyp is 4-hydroxyproline. Has no activity on substrates that lack 4-hydroxyproline in the third position. This chain is Prolyl 3-hydroxylase 2, found in Homo sapiens (Human).